Reading from the N-terminus, the 236-residue chain is Probable glutathione S-transferase BZ2 (236 aa).

Positions Met-1 to Gly-80 constitute a GST N-terminal domain. Glutathione is bound by residues Ser-9, Lys-37, Ile-51, and Glu-64–Ser-65. Residues Asp-92–Phe-221 enclose the GST C-terminal domain.

Belongs to the GST superfamily. HSP26 family.

It carries out the reaction RX + glutathione = an S-substituted glutathione + a halide anion + H(+). The protein operates within pigment biosynthesis; anthocyanin biosynthesis. The protein is Probable glutathione S-transferase BZ2 (BZ2) of Zea mays (Maize).